The primary structure comprises 351 residues: DNA polymerase IV (351 aa).

The UmuC domain maps to 4–185 (IIHVDMDCFF…LPLGKIPGVG (182 aa)). Asp8 and Asp103 together coordinate Mg(2+). Glu104 is a catalytic residue.

The protein belongs to the DNA polymerase type-Y family. Monomer. Requires Mg(2+) as cofactor.

The protein localises to the cytoplasm. It carries out the reaction DNA(n) + a 2'-deoxyribonucleoside 5'-triphosphate = DNA(n+1) + diphosphate. In terms of biological role, poorly processive, error-prone DNA polymerase involved in untargeted mutagenesis. Copies undamaged DNA at stalled replication forks, which arise in vivo from mismatched or misaligned primer ends. These misaligned primers can be extended by PolIV. Exhibits no 3'-5' exonuclease (proofreading) activity. May be involved in translesional synthesis, in conjunction with the beta clamp from PolIII. The chain is DNA polymerase IV from Cronobacter sakazakii (strain ATCC BAA-894) (Enterobacter sakazakii).